A 598-amino-acid polypeptide reads, in one-letter code: MFHPYRKTLLSGTVALALGLFATGAIAAGFQPAQPAGKLGAIVVDPYGNAPLTALIELDSHTISDVKVTVHGKGEKGVPVSYSVGKQSLATYDGIPVFGLYQKHANKVTVEYTENGKAMKEDYVIQTSAIVNRYMDNRSISDLQKTKVIKVAPGFEDRLYLVNTHTFTPQGAEFHWHGEKDKNAGLLDAGPAAGALPFDIAPFTFVVDTEGEYRWWLDQDTFYDGHDMNINKRGYLMGIRETPRGTFTAVQGQHWYEFDMMGQVLADHKLPRGFLDATHESIETVNGTVLLRVGKRNYRKEDGLHVHTIRDQIIEVDKSGRVIDVWDLTKILDPLRDSLLGALDAGAVCVNVDLEHAGQQAKLEPDTPFGDALGVGAERNWAHVNPIAYDAKDDAIILSSRHQGIVKIGSDKKVKWILAPAKGWNKQLASKLLKPVDSKGNPLTCNENGKCENTDFDFSYTQHTAWLTDKGTLTVFDNGDGRWLEQPALPSMKYSRFVEYKIDEKNGTVQPLWQYGKERGYDFYSPITSVIEYQKDRDTIFGFSGSINLFEVGQPTIGKINEIDYKTKDVKVEIDVLSDKPNQTHYRALLVHPQQMFK.

The signal sequence occupies residues 1 to 27; the sequence is MFHPYRKTLLSGTVALALGLFATGAIA. Residues histidine 279 and histidine 383 each coordinate 4-methylumbelliferone. A disulfide bridge connects residues cysteine 445 and cysteine 451. Histidine 463 contributes to the 4-methylumbelliferone binding site. Catalysis depends on histidine 463, which acts as the Nucleophile; sulfurylated histidine covalent intermediate.

The protein belongs to the aryl sulfotransferase family. In terms of assembly, monomer.

It is found in the periplasm. The catalysed reaction is an aryl sulfate + a phenol = an aryl sulfate + a phenol. It catalyses the reaction 4-methylumbelliferone sulfate + phenol = phenyl sulfate + 4-methylumbelliferone. The enzyme catalyses 2-naphthyl sulfate + phenol = phenyl sulfate + 2-naphthol. Functionally, catalyzes the transfer of a sulfate group from a phenyl sulfate ester to other phenolic compounds. Is able to use several substrate donors and acceptors in vitro: using phenol as an acceptor substrate, 4-methylumbelliferyl sulfate is the best donor substrate, followed by beta-naphthyl sulfate, p-nitrophenyl sulfate (PNS), and alpha-naphthyl sulfate; using PNS as a donor substrate, alpha-naphthol is the best acceptor substrate, followed by phenol, resorcinol, p-acetaminophen, tyramine, and tyrosine. Cannot use 3'-phosphoadenosine-5'-phophosulfate (PAPS), the donor substrate of mammalian sulfotransferase. May be a detoxifying enzyme, converting toxic phenolic compounds into non-toxic materials. In Lelliottia amnigena (Enterobacter amnigenus), this protein is Arylsulfate sulfotransferase AssT.